Here is a 512-residue protein sequence, read N- to C-terminus: Putative UDP-glucuronosyltransferase ugt-55 (512 aa).

Residues 1–22 (MQLLTLPTLIFIFLNYGTPCLS) form the signal peptide. A helical transmembrane segment spans residues 487–507 (ILLYLDSIAMFTLTLLTMILI).

The protein belongs to the UDP-glycosyltransferase family.

It is found in the membrane. The catalysed reaction is glucuronate acceptor + UDP-alpha-D-glucuronate = acceptor beta-D-glucuronoside + UDP + H(+). The protein is Putative UDP-glucuronosyltransferase ugt-55 (ugt-55) of Caenorhabditis elegans.